A 207-amino-acid chain; its full sequence is MYSAPSTCTCLCLHFLLLCFQVQVLAAEENVDFRIHVENQTRARDDVSRKQLRLYQLYSRTSGKHIQVLGRRISARGEDGDKYAQLLVETDTFGSQVRIKGKETEFYLCMNRKGKLVGKPDGTSKECVFIEKVLENNYTALMSAKYSGWYVGFTKKGRPRKGPKTRENQQDVHFMKRYPKGQAELQKPFKYTTVTKRSRRIRPTHPG.

Positions 1–27 are cleaved as a signal peptide; it reads MYSAPSTCTCLCLHFLLLCFQVQVLAA. Asn-39 is a glycosylation site (N-linked (GlcNAc...) asparagine). Residues Cys-109 and Cys-127 are joined by a disulfide bond. Asn-137 is a glycosylation site (N-linked (GlcNAc...) asparagine).

It belongs to the heparin-binding growth factors family. As to quaternary structure, interacts with FGFR3 and FGFR4.

It is found in the secreted. Its function is as follows. Plays an important role in the regulation of cell proliferation, cell differentiation and cell migration. Required for normal ossification and bone development. Stimulates hepatic and intestinal proliferation. In Bos taurus (Bovine), this protein is Fibroblast growth factor 18 (FGF18).